The primary structure comprises 591 residues: Acyl-CoA-dependent acyltransferase MAC1 (591 aa).

The segment at 589-591 is peroxisomal targeting signal type 1; that stretch reads ARL.

It belongs to the trichothecene O-acetyltransferase family.

It is found in the peroxisome. It functions in the pathway secondary metabolite biosynthesis. Functionally, acyl-CoA-dependent acyltransferase; part of the gene cluster that mediates the biosynthesis of mannosylerythritol lipids (MELs), surface-active substances that enhance the availability of water-insoluble substrates. Mannosylerythritol lipid production is responsible for hemolytic activity of Ustilago maydis. Depending on the number of acetyl groups, mannosylerythritol lipids can be differentiated into MEL A (fully acetylated), MEL B and MEL C (monoacetylated at R-6 and R-4, respectively), and the fully deacetylated MEL D. The first step in the pathway is the generation of mannosylerythritol by the glycosyltransferase EMT1 which catalyzes the transfer of GDP-mannose to the C-4 atom of meso-erythritol. This reaction has to be stereospecific, since only mannosyl-D-erythritol is generated. The produced disaccharide is subsequently acylated with fatty acids of various lengths derived from the peroxisomal beta-oxidation by the peroxisomal acyltransferases MAC1 and MAC2 at positions C-2 and C-3, repectively. The existence of MEL derivatives which carry an acetyl group at C-2 implies that at least MAC1 also accepts acetyl-CoA as a donor. The final step of MEL biosynthesis is the acetylation of the fully acylated mannosylerythritol lipids catalyzed by the acetyl-CoA-dependent acetyltransferase MAT1. MAT1 displays a relaxed regioselectivity and is able to transfer acetylgroups to both positions C-4 and C-6 of the mannosyl moiety. The protein is Acyl-CoA-dependent acyltransferase MAC1 of Mycosarcoma maydis (Corn smut fungus).